A 156-amino-acid chain; its full sequence is Ribosomal RNA large subunit methyltransferase H (156 aa).

S-adenosyl-L-methionine contacts are provided by residues leucine 73, glycine 104, and leucine 123–methionine 128.

Belongs to the RNA methyltransferase RlmH family. Homodimer.

It localises to the cytoplasm. It carries out the reaction pseudouridine(1915) in 23S rRNA + S-adenosyl-L-methionine = N(3)-methylpseudouridine(1915) in 23S rRNA + S-adenosyl-L-homocysteine + H(+). In terms of biological role, specifically methylates the pseudouridine at position 1915 (m3Psi1915) in 23S rRNA. The chain is Ribosomal RNA large subunit methyltransferase H from Tolumonas auensis (strain DSM 9187 / NBRC 110442 / TA 4).